The following is a 241-amino-acid chain: tRNA (guanine-N(7)-)-methyltransferase (241 aa).

S-adenosyl-L-methionine-binding residues include Gly-61, Glu-84, Arg-86, Asn-117, Ala-118, and Leu-137. Residue Asp-140 is part of the active site. The interval 141 to 149 (PHFKKTKHK) is alphaC helix. Thr-215 and Glu-217 together coordinate S-adenosyl-L-methionine. Residues 215-223 (TEEGKKVQR) form an alpha6 helix region.

This sequence belongs to the class I-like SAM-binding methyltransferase superfamily. TrmB family. In terms of assembly, catalytic component of the METTL1-WDR4 complex, composed of mettl1 and wdr4.

The protein resides in the nucleus. It catalyses the reaction guanosine(46) in tRNA + S-adenosyl-L-methionine = N(7)-methylguanosine(46) in tRNA + S-adenosyl-L-homocysteine. The enzyme catalyses a guanosine in mRNA + S-adenosyl-L-methionine = an N(7)-methylguanosine in mRNA + S-adenosyl-L-homocysteine. The catalysed reaction is a guanosine in miRNA + S-adenosyl-L-methionine = an N(7)-methylguanosine in miRNA + S-adenosyl-L-homocysteine. Its pathway is tRNA modification; N(7)-methylguanine-tRNA biosynthesis. Catalytic component of METTL1-WDR4 methyltransferase complex that mediates the formation of N(7)-methylguanine in a subset of RNA species, such as tRNAs, mRNAs and microRNAs (miRNAs). Catalyzes the formation of N(7)-methylguanine at position 46 (m7G46) in a large subset of tRNAs that contain the 5'-RAGGU-3' motif within the variable loop. M7G46 interacts with C13-G22 in the D-loop to stabilize tRNA tertiary structure and protect tRNAs from decay. Also acts as a methyltransferase for a subset of internal N(7)-methylguanine in mRNAs. Internal N(7)-methylguanine methylation of mRNAs in response to stress promotes their relocalization to stress granules, thereby suppressing their translation. Also methylates a specific subset of miRNAs. This Danio rerio (Zebrafish) protein is tRNA (guanine-N(7)-)-methyltransferase (mettl1).